A 311-amino-acid polypeptide reads, in one-letter code: Mediator of RNA polymerase II transcription subunit 27 (311 aa).

This sequence belongs to the Mediator complex subunit 27 family. Component of the Mediator complex.

It is found in the nucleus. Its function is as follows. Component of the Mediator complex, a coactivator involved in the regulated transcription of nearly all RNA polymerase II-dependent genes. Mediator functions as a bridge to convey information from gene-specific regulatory proteins to the basal RNA polymerase II transcription machinery. Mediator is recruited to promoters by direct interactions with regulatory proteins and serves as a scaffold for the assembly of a functional preinitiation complex with RNA polymerase II and the general transcription factors. Required for the development of dopaminergic amacrine cells in the retina. May also negatively regulate the development of rod photoreceptor cells. The polypeptide is Mediator of RNA polymerase II transcription subunit 27 (med27) (Danio rerio (Zebrafish)).